The following is a 98-amino-acid chain: MRYTTSFIGLCFLIFLLKNLVNGGLIRECDYTMEGYGPCGPNGRSLCLDTFWKTPPSPGLSKNLEGCRCEDRGKRPPIFTGLSHTCRCCWSYGGGSDD.

Positions 1 to 23 (MRYTTSFIGLCFLIFLLKNLVNG) are cleaved as a signal peptide. Intrachain disulfides connect Cys-29-Cys-89, Cys-39-Cys-69, Cys-47-Cys-86, and Cys-67-Cys-88.

It belongs to the DEFL family.

Its subcellular location is the secreted. The protein is Putative defensin-like protein 239 (SCRL17) of Arabidopsis thaliana (Mouse-ear cress).